Reading from the N-terminus, the 100-residue chain is NADH-quinone oxidoreductase subunit K (100 aa).

The next 3 helical transmembrane spans lie at 4–24 (LSHG…SLVM), 28–48 (ILFM…ALVV), and 60–80 (IMYI…LALL).

This sequence belongs to the complex I subunit 4L family. As to quaternary structure, NDH-1 is composed of 13 different subunits. Subunits NuoA, H, J, K, L, M, N constitute the membrane sector of the complex.

The protein resides in the cell membrane. The enzyme catalyses a quinone + NADH + 5 H(+)(in) = a quinol + NAD(+) + 4 H(+)(out). Its function is as follows. NDH-1 shuttles electrons from NADH, via FMN and iron-sulfur (Fe-S) centers, to quinones in the respiratory chain. The immediate electron acceptor for the enzyme in this species is believed to be ubiquinone. Couples the redox reaction to proton translocation (for every two electrons transferred, four hydrogen ions are translocated across the cytoplasmic membrane), and thus conserves the redox energy in a proton gradient. In Buchnera aphidicola subsp. Baizongia pistaciae (strain Bp), this protein is NADH-quinone oxidoreductase subunit K.